A 198-amino-acid chain; its full sequence is 7-methyl-GTP pyrophosphatase (198 aa).

Catalysis depends on aspartate 75, which acts as the Proton acceptor.

The protein belongs to the Maf family. YceF subfamily. A divalent metal cation is required as a cofactor.

It is found in the cytoplasm. The enzyme catalyses N(7)-methyl-GTP + H2O = N(7)-methyl-GMP + diphosphate + H(+). Functionally, nucleoside triphosphate pyrophosphatase that hydrolyzes 7-methyl-GTP (m(7)GTP). May have a dual role in cell division arrest and in preventing the incorporation of modified nucleotides into cellular nucleic acids. The chain is 7-methyl-GTP pyrophosphatase from Bartonella henselae (strain ATCC 49882 / DSM 28221 / CCUG 30454 / Houston 1) (Rochalimaea henselae).